The sequence spans 369 residues: MVVVNGYKQNENEKKLNVLNLDQLEKQAKEIIPTGGFGYISGGSEDEWTLRENRRAFTHKQIVPRALTNIEKPELETNVFGIPLKTPLFMVPAAAQGLAHVKGEVDTAKGVAAVGGLMAQSTYSSTSIADTAASGTGAPQFFQLYMSKDWDFNEALLDEAKRAGVKGIILTVDATVDGYREADIINNFQFPIPMANLTKYSEDDGQGKGIAEIYASAAQKIGSDDVARIANYTDLPVIVKGIESPEDALYAIGAGASGIYVSNHGGRQLNGGPASFDVLEDVAKAVNGKVPVIFDSGIRRGSDVFKALASGADLVGIGRPVIYGLALGGAQGVQSVFEHLDHELEIIMQLAGTKTISDVKNAKLLNIRY.

One can recognise an FMN hydroxy acid dehydrogenase domain in the interval 13–369 (EKKLNVLNLD…KNAKLLNIRY (357 aa)). Tyrosine 39 serves as a coordination point for pyruvate. FMN is bound by residues 92–94 (PAA), serine 121, and glutamine 143. Position 145 (tyrosine 145) interacts with pyruvate. FMN is bound at residue threonine 171. Arginine 180 lines the pyruvate pocket. FMN-binding residues include lysine 240 and serine 262. Pyruvate contacts are provided by histidine 264 and arginine 267. The active-site Proton acceptor is the histidine 264. FMN is bound by residues 295–299 (DSGIR) and arginine 319.

Belongs to the FMN-dependent alpha-hydroxy acid dehydrogenase family. Homotetramer. It depends on FMN as a cofactor.

The catalysed reaction is (S)-lactate + O2 = pyruvate + H2O2. Catalyzes the oxidation of (S)-lactate (L-lactate) to pyruvate, with a reduction of O2 to H2O2. May be involved in the utilization of L-lactate as an energy source for growth. The chain is L-lactate oxidase from Lentilactobacillus hilgardii (strain ATCC 8290 / DSM 20176 / CCUG 30140 / JCM 1155 / KCTC 3500 / NBRC 15886 / NCIMB 8040 / NRRL B-1843 / 9).